A 242-amino-acid chain; its full sequence is N-glycosylase/DNA lyase (242 aa).

3 residues coordinate 8-oxoguanine: Gln26, Ser53, and Trp64. Positions 120–184 (EGYYKNMKML…EDLRIKSVTS (65 aa)) are helix-hairpin-helix. Lys144 functions as the Schiff-base intermediate with DNA in the catalytic mechanism. 8-oxoguanine contacts are provided by Phe148 and Pro174. Asp176 is an active-site residue. Asp210 and Trp214 together coordinate 8-oxoguanine.

This sequence belongs to the archaeal N-glycosylase/DNA lyase (AGOG) family.

The catalysed reaction is 2'-deoxyribonucleotide-(2'-deoxyribose 5'-phosphate)-2'-deoxyribonucleotide-DNA = a 3'-end 2'-deoxyribonucleotide-(2,3-dehydro-2,3-deoxyribose 5'-phosphate)-DNA + a 5'-end 5'-phospho-2'-deoxyribonucleoside-DNA + H(+). DNA repair enzyme that is part of the base excision repair (BER) pathway; protects from oxidative damage by removing the major product of DNA oxidation, 8-oxoguanine (GO), from single- and double-stranded DNA substrates. In Pyrococcus furiosus (strain ATCC 43587 / DSM 3638 / JCM 8422 / Vc1), this protein is N-glycosylase/DNA lyase.